A 355-amino-acid chain; its full sequence is Protein RecA (355 aa).

G67 to T74 provides a ligand contact to ATP.

It belongs to the RecA family.

Its subcellular location is the cytoplasm. Can catalyze the hydrolysis of ATP in the presence of single-stranded DNA, the ATP-dependent uptake of single-stranded DNA by duplex DNA, and the ATP-dependent hybridization of homologous single-stranded DNAs. It interacts with LexA causing its activation and leading to its autocatalytic cleavage. The sequence is that of Protein RecA from Histophilus somni (strain 129Pt) (Haemophilus somnus).